A 261-amino-acid chain; its full sequence is Histone H3-like centromeric protein cpar-1 (261 aa).

A disordered region spans residues 80–150 (TVGSNSTNLV…AGSSSSDRVR (71 aa)). Residues 113 to 127 (AANSHHQSPINVGNR) show a composition bias toward polar residues. Residues 132–146 (GTNGRNGSRAGSSSS) are compositionally biased toward low complexity. Residues 164-261 (YRPGQKALEE…LYRRLCLPNL (98 aa)) form an H3-like region.

The protein belongs to the histone H3 family. In terms of assembly, forms a nucleosome-like histone octamer containing two molecules each of H2A, H2B, cpar-1 and H4 assembled in one cpar-1-H4 heterotetramer and two H2A-H2B heterodimers. Post-translationally, cleaved at the onset of meiotic anaphase I, likely by separase sep-1.

It is found in the nucleus. The protein resides in the chromosome. Its function is as follows. Histone H3-like variant which exclusively replaces conventional H3 in the nucleosome core of centromeric chromatin at the inner plate of the kinetochore. Required for recruitment and assembly of kinetochore proteins, mitotic progression and chromosome segregation. May serve as an epigenetic mark that propagates centromere identity through replication and cell division. Not required for chromosome segregation during meiosis. In Caenorhabditis elegans, this protein is Histone H3-like centromeric protein cpar-1.